The chain runs to 571 residues: Potassium-transporting ATPase potassium-binding subunit (571 aa).

The next 12 membrane-spanning stretches (helical) occupy residues 5–25, 64–84, 136–156, 179–199, 220–240, 254–274, 285–305, 330–350, 375–395, 421–441, 488–508, and 527–547; these read GWMQIALYGAVVLALVRPLGG, LAYAGAMILFNVAGFVLLYAL, GLTHQNFVSAASGMAVAVALI, LYVLLPLSTVLALFYVSQGMP, VGPVASQVAIKMLGTNGGGFF, LSNFLQMLSIFVIGAALTNVF, WAILAAMGLLFLAGVTVTYWA, FGIAASALFAVITTAASCGAV, IIGGVGAGLYGMLVFVVVAIF, MLGILCLPLMMLGFTAIATVV, LAIGMLVGRFFVKIPVLAIAG, and GGLFVGLLVGVVLIIGGLTFF.

It belongs to the KdpA family. The system is composed of three essential subunits: KdpA, KdpB and KdpC.

Its subcellular location is the cell inner membrane. Its function is as follows. Part of the high-affinity ATP-driven potassium transport (or Kdp) system, which catalyzes the hydrolysis of ATP coupled with the electrogenic transport of potassium into the cytoplasm. This subunit binds the periplasmic potassium ions and delivers the ions to the membrane domain of KdpB through an intramembrane tunnel. The chain is Potassium-transporting ATPase potassium-binding subunit from Methylorubrum extorquens (strain CM4 / NCIMB 13688) (Methylobacterium extorquens).